Consider the following 534-residue polypeptide: Nitrate/nitrite transporter NrtP (534 aa).

The next 12 membrane-spanning stretches (helical) occupy residues 19 to 39 (WFAFFLSFVVWFNFPPFATTI), 52 to 72 (TIGLCNVALTVPARIIIGMLL), 79 to 99 (LTYSLLLIYAAVPCLIFATAQ), 109 to 129 (LLMGIVGAGFVIGIRMVAEWF), 150 to 170 (AFSAFTMVIFGIILAFLPGAF), 195 to 215 (AAIAGTGIIAALYGMLYYFSV), 240 to 260 (DFWFLLAMNLPLTLILMVLAW), 266 to 286 (NFLNGTGFAIAILALVGLYLF), 382 to 404 (WTMVVLTVGMGVGYLLMSSVAGT), 409 to 431 (IAVLLTMACSFFVQAAEGSTFAI), 445 to 465 (GNVGAYGNVGAVAYLTVLLLL), and 485 to 505 (GFFQVLGITGLIVAFLCAFFL).

The protein belongs to the major facilitator superfamily. Nitrate/nitrite porter (TC 2.A.1.8) family.

It is found in the cell inner membrane. High-efficiency transport system for both nitrate and nitrite. The chain is Nitrate/nitrite transporter NrtP from Picosynechococcus sp. (strain ATCC 27264 / PCC 7002 / PR-6) (Agmenellum quadruplicatum).